A 76-amino-acid polypeptide reads, in one-letter code: Conotoxin Vc6.3 (76 aa).

An N-terminal signal peptide occupies residues 1-22; the sequence is MKLTCVMIVAVLFLTANTFATA. A propeptide spanning residues 23 to 50 is cleaved from the precursor; it reads DDPRNGLRDLFSIAHHEMKNPEASKLNE. 3 disulfide bridges follow: cysteine 52/cysteine 66, cysteine 59/cysteine 70, and cysteine 67/cysteine 75.

Belongs to the conotoxin O1 superfamily. Expressed by the venom duct.

Its subcellular location is the secreted. The protein is Conotoxin Vc6.3 of Conus victoriae (Queen Victoria cone).